We begin with the raw amino-acid sequence, 187 residues long: Elongation factor P (187 aa).

It belongs to the elongation factor P family.

It localises to the cytoplasm. It functions in the pathway protein biosynthesis; polypeptide chain elongation. In terms of biological role, involved in peptide bond synthesis. Stimulates efficient translation and peptide-bond synthesis on native or reconstituted 70S ribosomes in vitro. Probably functions indirectly by altering the affinity of the ribosome for aminoacyl-tRNA, thus increasing their reactivity as acceptors for peptidyl transferase. This is Elongation factor P from Rhodococcus erythropolis (strain PR4 / NBRC 100887).